A 1298-amino-acid chain; its full sequence is DNA repair protein rad-50 (1298 aa).

ATP contacts are provided by Arg-13, Asn-38, Gly-39, Gly-41, Lys-42, Thr-43, Thr-44, Ile-66, and Gln-158. Thr-43 is a Mg(2+) binding site. Gln-158 is a Mg(2+) binding site. Coiled coils occupy residues 222-291 (ARQN…IRVE), 317-598 (EERA…QYRK), and 622-660 (AEEVSEKLENLRKRLKKARKDLAPLSAKSNLYDSYIEES). Positions 622 to 719 (AEEVSEKLEN…EEIIIVKAEG (98 aa)) constitute a Zinc-hook domain. Zn(2+) contacts are provided by Cys-666 and Cys-669. Coiled coils occupy residues 691–719 (LSFPTEQEELEKLVSKLEKEEIIIVKAEG) and 754–1092 (KNEK…KESI).

This sequence belongs to the SMC family. RAD50 subfamily. Component of the MRN complex composed of two heterodimers rad-50 and mre-11 associated with a single nbs-1. Zn(2+) serves as cofactor.

The protein localises to the nucleus. Its subcellular location is the chromosome. The catalysed reaction is ATP + H2O = ADP + phosphate + H(+). Its function is as follows. Component of the MRN complex, which plays a central role in double-strand break (DSB) repair, DNA recombination, maintenance of telomere integrity and meiosis. The MRN complex is involved in the repair of DNA double-strand breaks (DSBs) via homologous recombination (HR), an error-free mechanism which primarily occurs during S and G2 phases. The complex (1) mediates the end resection of damaged DNA, which generates proper single-stranded DNA, a key initial steps in HR, and is (2) required for the recruitment of other repair factors and efficient activation of ATM and ATR upon DNA damage. The MRN complex possesses single-strand endonuclease activity and double-strand-specific 3'-5' exonuclease activity, which are provided by mre-11, to initiate end resection, which is required for single-strand invasion and recombination. Within the complex, rad-50 is both required to bind DNA ends and hold them in close proximity and regulate the activity of mre-11. Rad-50 provides an ATP-dependent control of mre-11 by positioning DNA ends into the mre-11 active site: ATP-binding induces a large structural change from an open form with accessible mre-11 nuclease sites into a closed form. The polypeptide is DNA repair protein rad-50 (rad-50) (Caenorhabditis elegans).